The chain runs to 676 residues: RNA helicase NPH-II (676 aa).

Residues 172–347 enclose the Helicase ATP-binding domain; that stretch reads FSAWISHRPV…VFLPNPAFIH (176 aa). 185-192 provides a ligand contact to ATP; that stretch reads GGTGVGKT. Positions 296-299 match the DEXH box motif; sequence DEVH. Residues 366-535 form the Helicase C-terminal domain; it reads NPSSRMAYIE…NYILYANKFN (170 aa).

Belongs to the DEAD box helicase family. DEAH subfamily. Monomer.

Its subcellular location is the virion. The catalysed reaction is ATP + H2O = ADP + phosphate + H(+). NTP-dependent helicase that catalyzes unidirectional unwinding of 3'tailed duplex RNAs and plays an important role during transcription of early mRNAs, presumably by preventing R-loop formation behind the elongating RNA polymerase. Might also play a role in the export of newly synthesized mRNA chains out of the core into the cytoplasm. Required for replication and propagation of viral particles. This is RNA helicase NPH-II (OPG084) from Bos taurus (Bovine).